Consider the following 200-residue polypeptide: Recombination protein RecR (200 aa).

A C4-type zinc finger spans residues Cys-58 to Cys-73. One can recognise a Toprim domain in the interval Gly-81–Ala-176.

This sequence belongs to the RecR family.

In terms of biological role, may play a role in DNA repair. It seems to be involved in an RecBC-independent recombinational process of DNA repair. It may act with RecF and RecO. This Amoebophilus asiaticus (strain 5a2) protein is Recombination protein RecR.